The following is a 141-amino-acid chain: Cystatin-SA (141 aa).

Residues 1–20 (MAWPLCTLLLLLATQAVALA) form the signal peptide. The short motif at 76 to 80 (QIVGG) is the Secondary area of contact element. Intrachain disulfides connect C94–C104 and C118–C138.

In terms of tissue distribution, expressed in submandibular and sublingual saliva but not in parotid saliva (at protein level). Expressed in submandibular gland and parotid gland.

It localises to the secreted. Its function is as follows. Thiol protease inhibitor. The sequence is that of Cystatin-SA (CST2) from Homo sapiens (Human).